We begin with the raw amino-acid sequence, 200 residues long: Casparian strip membrane protein 1 (200 aa).

Residues 1-38 (MSTTIEIPAESSAVAKGKAPLIGASSSSYEKKGGYKKG) lie on the Cytoplasmic side of the membrane. A helical transmembrane segment spans residues 39 to 59 (IAIFDFILRLGAVISALSAAA). Residues 60-88 (TMGTSDETLPFFTQFFQFEAGYDDFPTFQ) lie on the Extracellular side of the membrane. Residues 89 to 109 (FFVIAMGFVGGYLVLSLPFSV) traverse the membrane as a helical segment. Residues 110 to 121 (VAIIRPHAVGIR) are Cytoplasmic-facing. Residues 122–142 (LLLLILDTVALTLNTAAAAAA) form a helical membrane-spanning segment. The Extracellular portion of the chain corresponds to 143–175 (AAIVYLAHNGNQSANWLAVCQQFGDFCQKVSGG). Residue asparagine 153 is glycosylated (N-linked (GlcNAc...) asparagine). The chain crosses the membrane as a helical span at residues 176-196 (VVASFVSVLVFLLLVVMSAVA). Over 197–200 (LRKH) the chain is Cytoplasmic.

The protein belongs to the Casparian strip membrane proteins (CASP) family. In terms of assembly, homodimer and heterodimers.

It localises to the cell membrane. In terms of biological role, regulates membrane-cell wall junctions and localized cell wall deposition. Required for establishment of the Casparian strip membrane domain (CSD) and the subsequent formation of Casparian strips, a cell wall modification of the root endodermis that determines an apoplastic barrier between the intraorganismal apoplasm and the extraorganismal apoplasm and prevents lateral diffusion. The chain is Casparian strip membrane protein 1 from Ricinus communis (Castor bean).